The following is a 406-amino-acid chain: Vacuole membrane protein 1 (406 aa).

Residues 1-21 (MAENGKNCDQRRVAMNKEHHN) are compositionally biased toward basic and acidic residues. The interval 1–35 (MAENGKNCDQRRVAMNKEHHNGNFTDPSSVNEKKR) is disordered. A2 is modified (N-acetylalanine). Residues 2–43 (AENGKNCDQRRVAMNKEHHNGNFTDPSSVNEKKRREREERQN) lie on the Cytoplasmic side of the membrane. The chain crosses the membrane as a helical span at residues 44–64 (IVLWRQPLITLQYFSLEILVI). Topologically, residues 65-77 (LKEWTSKLWHRQS) are extracellular. Residues 78–98 (IVVSFLLLLAVLIATYYVEGV) traverse the membrane as a helical segment. At 99-109 (HQQYVQRIEKQ) the chain is on the cytoplasmic side. Residues 110–130 (FLLYAYWIGLGILSSVGLGTG) form a helical membrane-spanning segment. Over 131–250 (LHTFLLYLGP…ASRAKLAVQK (120 aa)) the chain is Extracellular. The VTT domain stretch occupies residues 173-316 (GTEGTISLWS…FVIITFSKHI (144 aa)). Residues 251–271 (LVQKVGFFGILACASIPNPLF) traverse the membrane as a helical segment. Over 272 to 273 (DL) the chain is Cytoplasmic. Residues 274-294 (AGITCGHFLVPFWTFFGATLI) form a helical membrane-spanning segment. Over 295 to 305 (GKAIIKMHIQK) the chain is Extracellular. Residues 306-326 (IFVIITFSKHIVEQMVAFIGA) traverse the membrane as a helical segment. The Cytoplasmic portion of the chain corresponds to 327-363 (VPGIGPSLQKPFQEYLEAQRQKLHHKSEMGTPQGENW). A helical transmembrane segment spans residues 364 to 384 (LSWMFEKLVVVMVCYFILSII). The Extracellular segment spans residues 385 to 406 (NSMAQSYAKRIQQRLNSEEKTK).

Belongs to the VMP1 family. As to quaternary structure, interacts with BECN1. Interacts with TJP1. Interacts with TP53INP2. Interacts with TMEM41B. Interacts with ATP2A2, PLN and SLN; competes with PLN and SLN to prevent them from forming an inhibitory complex with ATP2A2. Interacts with ATG2A.

The protein localises to the endoplasmic reticulum-Golgi intermediate compartment membrane. It is found in the cell membrane. Its subcellular location is the vacuole membrane. It localises to the endoplasmic reticulum membrane. It catalyses the reaction a 1,2-diacyl-sn-glycero-3-phospho-L-serine(in) = a 1,2-diacyl-sn-glycero-3-phospho-L-serine(out). The catalysed reaction is cholesterol(in) = cholesterol(out). The enzyme catalyses a 1,2-diacyl-sn-glycero-3-phosphocholine(in) = a 1,2-diacyl-sn-glycero-3-phosphocholine(out). It carries out the reaction a 1,2-diacyl-sn-glycero-3-phosphoethanolamine(in) = a 1,2-diacyl-sn-glycero-3-phosphoethanolamine(out). In terms of biological role, phospholipid scramblase involved in lipid homeostasis and membrane dynamics processes. Has phospholipid scramblase activity toward cholesterol and phosphatidylserine, as well as phosphatidylethanolamine and phosphatidylcholine. Required for autophagosome formation: participates in early stages of autophagosome biogenesis at the endoplasmic reticulum (ER) membrane by reequilibrating the leaflets of the ER as lipids are extracted by ATG2 (ATG2A or ATG2B) to mediate autophagosome assembly. Regulates ATP2A2 activity to control ER-isolation membrane contacts for autophagosome formation. In addition to autophagy, involved in other processes in which phospholipid scramblase activity is required. Modulates ER contacts with lipid droplets, mitochondria and endosomes. Plays an essential role in formation of cell junctions. Upon stress such as bacterial and viral infection, promotes formation of cytoplasmic vacuoles followed by cell death. Involved in the cytoplasmic vacuolization of acinar cells during the early stage of acute pancreatitis. Its function is as follows. (Microbial infection) Host factor required for infection by all flaviviruses tested such as Zika virus and Yellow fever virus. Probably required post-entry of the virus to facilitate the ER membrane remodeling necessary to form replication organelles. The sequence is that of Vacuole membrane protein 1 from Homo sapiens (Human).